Reading from the N-terminus, the 274-residue chain is Protein RecA (274 aa).

43 to 50 (GPESSGKT) lines the ATP pocket.

The protein belongs to the RecA family.

It localises to the cytoplasm. Its function is as follows. Can catalyze the hydrolysis of ATP in the presence of single-stranded DNA, the ATP-dependent uptake of single-stranded DNA by duplex DNA, and the ATP-dependent hybridization of homologous single-stranded DNAs. It interacts with LexA causing its activation and leading to its autocatalytic cleavage. This is Protein RecA from Neisseria polysaccharea.